A 375-amino-acid polypeptide reads, in one-letter code: DNA replication and repair protein RecF (375 aa).

Residue Gly-30–Thr-37 coordinates ATP.

It belongs to the RecF family.

Its subcellular location is the cytoplasm. In terms of biological role, the RecF protein is involved in DNA metabolism; it is required for DNA replication and normal SOS inducibility. RecF binds preferentially to single-stranded, linear DNA. It also seems to bind ATP. This Symbiobacterium thermophilum (strain DSM 24528 / JCM 14929 / IAM 14863 / T) protein is DNA replication and repair protein RecF.